The chain runs to 110 residues: Small ribosomal subunit protein eS25 (110 aa).

Residues M1–E39 form a disordered region.

It belongs to the eukaryotic ribosomal protein eS25 family.

The polypeptide is Small ribosomal subunit protein eS25 (rps25) (Dictyostelium discoideum (Social amoeba)).